Consider the following 332-residue polypeptide: 2,7-dihydroxy-5-methyl-1-naphthoate 7-O-methyltransferase (332 aa).

Substrate is bound at residue Arg11. S-adenosyl-L-methionine is bound by residues Trp133, His153, 175–179 (DVGGG), Gly177, Asp200, 227–228 (SF), and 242–243 (SA). His246 acts as the Proton acceptor in catalysis. Residue Asp247 coordinates substrate.

It belongs to the class I-like SAM-binding methyltransferase superfamily. Cation-independent O-methyltransferase family.

The catalysed reaction is 2,7-dihydroxy-5-methyl-1-naphthoate + S-adenosyl-L-methionine = 2-hydroxy-7-methoxy-5-methyl-1-naphthoate + S-adenosyl-L-homocysteine + H(+). It functions in the pathway antibiotic biosynthesis. In terms of biological role, S-adenosyl-L-methionine-dependent O-methyltransferase that catalyzes regiospecific methylation at the 7-hydroxy group of 2,7-dihydroxy-5-methyl-1-naphthoate in the biosynthesis of the naphthoate moiety of the neocarzinostatin chromophore. Also recognizes other dihydroxynaphthoate as substrates and catalyzes their regiospecific O-methylation. The carboxylate and its ortho-hydroxy groups of the substrate appear to be crucial for NcsB1 substrate recognition and binding, and O-methylation takes place only at the free hydroxy group of these dihydroxynaphthoic acids. The chain is 2,7-dihydroxy-5-methyl-1-naphthoate 7-O-methyltransferase from Streptomyces carzinostaticus.